A 274-amino-acid chain; its full sequence is Energy-coupling factor transporter ATP-binding protein EcfA1 (274 aa).

The 232-residue stretch at 9–240 (CSFINVAFSY…EQELQKIRLD (232 aa)) folds into the ABC transporter domain. 41–48 (GHNGSGKS) provides a ligand contact to ATP.

Belongs to the ABC transporter superfamily. Energy-coupling factor EcfA family. In terms of assembly, forms a stable energy-coupling factor (ECF) transporter complex composed of 2 membrane-embedded substrate-binding proteins (S component), 2 ATP-binding proteins (A component) and 2 transmembrane proteins (T component).

It localises to the cell membrane. Functionally, ATP-binding (A) component of a common energy-coupling factor (ECF) ABC-transporter complex. Unlike classic ABC transporters this ECF transporter provides the energy necessary to transport a number of different substrates. The protein is Energy-coupling factor transporter ATP-binding protein EcfA1 of Mycoplasma genitalium (strain ATCC 33530 / DSM 19775 / NCTC 10195 / G37) (Mycoplasmoides genitalium).